Reading from the N-terminus, the 962-residue chain is MTTETLTQLEQHELFLRRHIGPGADQQQEMLNFVGAESLEDLTAQIVPGAILLNRDLAVGDSCGEAEGLAYIRKIADKNKVFKSYIGMGYHGTEVPSVIQRNVLENPGWYTAYTPYQPEIAQGRLEAILNFQQVSMDLTGLDLASSSLLDEATAAAEAMALSKRVSKAKKANIFFVADDVFPQTIDVIKTRAECFGFEVVVGPAEEAVNYELFGALFQYTNRVGQICDHTELFAKLHEKKALVSVAADIMSLVVLKSPGSMGADVVLGNSQRFGVPMGFGGPHAAFFVTRDEYKRSLPGRIIGVSQDTRGNRALRMAMQTREQHIRREKANSNICTAQVLLANMASFYAVFHGPQGLKVIAERIHRLTDIVAAALTAKGVELVNNTWFDTLSIKGLDVTAVQARALATGLNLRIDSDGVIGVSLSETTTRSDVAELFDVLLGEGHGQDAAALDAAIIANGSSSIPSELVRKDAILTHPTFNRYQSETEMMRYIKRLENKDLALNHSMISLGSCTMKLNAATEMAPITWPEFGNMHPFCPQDQAQGYAQLLEELSTWLVDITGYDAVSLQPNSGAQGEYAGLLAIKQYHESRGDAHRNICLIPQSAHGTNPASAQLAGMKIVVTACDKAGNIDMADLKAKAAEVADNLSCIMVTYPSTHGVYEETIGEICEVIHQHGGQVYLDGANMNAQVGLTSPGFIGADVSHLNLHKTFAIPHGGGGPGMGPIGVKKHLAPFLSGHSVVKHGLESDNNGAVSAAPFGSAGILPITWMYIKLLGKKGLRQSTQVALLNANYVMKKLSAHYPVLYTGRNDRVAHECIIDLRPLKEASGVTEMDIAKRLNDYGFHAPTMSFPVAGTLMIEPTESESKVELDRFIEAMVSIRGEIAKVEAGEWPVDNNPLHNAPHTLADIMDPAFDSRPYSREEAVFPTNAVKANKFWPTVNRIDDVYGDRNLMCSCAPVSDYE.

An N6-(pyridoxal phosphate)lysine modification is found at lysine 709.

The protein belongs to the GcvP family. In terms of assembly, the glycine cleavage system is composed of four proteins: P, T, L and H. Pyridoxal 5'-phosphate serves as cofactor.

It carries out the reaction N(6)-[(R)-lipoyl]-L-lysyl-[glycine-cleavage complex H protein] + glycine + H(+) = N(6)-[(R)-S(8)-aminomethyldihydrolipoyl]-L-lysyl-[glycine-cleavage complex H protein] + CO2. Functionally, the glycine cleavage system catalyzes the degradation of glycine. The P protein binds the alpha-amino group of glycine through its pyridoxal phosphate cofactor; CO(2) is released and the remaining methylamine moiety is then transferred to the lipoamide cofactor of the H protein. The protein is Glycine dehydrogenase (decarboxylating) of Shewanella pealeana (strain ATCC 700345 / ANG-SQ1).